Here is a 374-residue protein sequence, read N- to C-terminus: Transcription termination factor 1, mitochondrial (374 aa).

Residues 1 to 37 constitute a mitochondrion transit peptide; sequence MASRNIWRVRRNFLFDLRGWVPQYSAEVFLKSIPFRP. 5 interaction with DNA regions span residues 146-147, 224-228, 301-308, 332-335, and 361-368; these read RS, QSTKR, SEKKFNDK, SIHT, and SQRRYEAK.

This sequence belongs to the mTERF family. Monomer. Post-translationally, is a phosphoprotein. While the DNA-binding activity is unaffected by the phosphorylation/dephosphorylation state, only the phosphorylated form of the protein is active for termination activity. Functioning seems to be regulated by phosphorylation.

The protein resides in the mitochondrion. Its function is as follows. Transcription termination factor. Binds to a 28 bp region within the tRNA(Leu(uur)) gene at a position immediately adjacent to and downstream of the 16S rRNA gene; this region comprises a tridecamer sequence critical for directing accurate termination. Binds DNA along the major grove and promotes DNA bending and partial unwinding. Promotes base flipping. Transcription termination activity appears to be polarized with highest specificity for transcripts initiated on the light strand. The polypeptide is Transcription termination factor 1, mitochondrial (Mterf1) (Rattus norvegicus (Rat)).